We begin with the raw amino-acid sequence, 443 residues long: Tryptophan synthase beta chain 2, chloroplastic (443 aa).

The disordered stretch occupies residues 1–32; that stretch reads PGPPPPAPEGRRRRGRGRNAAGQAVAAEASPA. The N-terminal 45 residues, 1-45, are a transit peptide targeting the chloroplast; the sequence is PGPPPPAPEGRRRRGRGRNAAGQAVAAEASPAAVEMGNGAAAPGL. A compositionally biased stretch (low complexity) spans 18–32; that stretch reads RNAAGQAVAAEASPA. K138 carries the N6-(pyridoxal phosphate)lysine modification.

It belongs to the TrpB family. In terms of assembly, tetramer of two alpha and two beta chains. Requires pyridoxal 5'-phosphate as cofactor.

It localises to the plastid. It is found in the chloroplast. It carries out the reaction (1S,2R)-1-C-(indol-3-yl)glycerol 3-phosphate + L-serine = D-glyceraldehyde 3-phosphate + L-tryptophan + H2O. It functions in the pathway amino-acid biosynthesis; L-tryptophan biosynthesis; L-tryptophan from chorismate: step 5/5. Its function is as follows. The beta subunit is responsible for the synthesis of L-tryptophan from indole and L-serine. This chain is Tryptophan synthase beta chain 2, chloroplastic (TSB2), found in Zea mays (Maize).